The primary structure comprises 428 residues: MQTYTIKPAQSVRGEIAVPGDKSISHRSIMLGSIARGTTTVCGFLRGEDNMATLNAFRAMGVDVRDDGETLRIEGKGLAGLSEPTDVLDCGNSGTSMRLMTGLLAGQRFFSVLTGDQYLRNRPMKRVLEPLSRMGATIFGRAGGDKAPLAVVGRGLTGVTYASPVSSAQVKSAILLAGLYADGETEVTEPHLSRDHSERMLRYFGADIETFAGGVKVRGRELTGRDITVPGDISSAAFFIVAALIVPGSELLIKGVGVNPTRTGIIDILTAMGGSIELLNCREISGEPVADLLVRASELKGIEIGGDLVPRAIDEFPVICVAASCAEGRTVIRDARELRVKETDRIAAMAVNLRKAGVDVVETENGMELIGVERLEGCTAESFGDHRIAMSMLIAGLAARGEITVNDTECIATSFPNFIALLEKVVVP.

3-phosphoshikimate is bound by residues Lys-22, Ser-23, and Arg-27. A phosphoenolpyruvate-binding site is contributed by Lys-22. Phosphoenolpyruvate is bound by residues Gly-94 and Arg-122. The 3-phosphoshikimate site is built by Ser-167, Gln-169, Asp-314, and Lys-341. Gln-169 serves as a coordination point for phosphoenolpyruvate. The active-site Proton acceptor is the Asp-314. Phosphoenolpyruvate-binding residues include Arg-345 and Arg-387.

This sequence belongs to the EPSP synthase family. Monomer.

It localises to the cytoplasm. It catalyses the reaction 3-phosphoshikimate + phosphoenolpyruvate = 5-O-(1-carboxyvinyl)-3-phosphoshikimate + phosphate. It functions in the pathway metabolic intermediate biosynthesis; chorismate biosynthesis; chorismate from D-erythrose 4-phosphate and phosphoenolpyruvate: step 6/7. Functionally, catalyzes the transfer of the enolpyruvyl moiety of phosphoenolpyruvate (PEP) to the 5-hydroxyl of shikimate-3-phosphate (S3P) to produce enolpyruvyl shikimate-3-phosphate and inorganic phosphate. The polypeptide is 3-phosphoshikimate 1-carboxyvinyltransferase (Geotalea uraniireducens (strain Rf4) (Geobacter uraniireducens)).